Reading from the N-terminus, the 309-residue chain is Probable manganese-dependent inorganic pyrophosphatase (309 aa).

The Mn(2+) site is built by His-9, Asp-13, Asp-15, Asp-75, His-97, and Asp-149.

This sequence belongs to the PPase class C family. Mn(2+) is required as a cofactor.

The protein localises to the cytoplasm. The enzyme catalyses diphosphate + H2O = 2 phosphate + H(+). This chain is Probable manganese-dependent inorganic pyrophosphatase, found in Bacillus mycoides (strain KBAB4) (Bacillus weihenstephanensis).